Reading from the N-terminus, the 471-residue chain is MDNLNFILPEIFISLSIMFLLLLGVYKKNSSNIVHNLAVGSLLITGILIFNNPLDQNISLFNDGYVVDNLSSFMKILTILGGAFVLSISTRYLKIFKIFLIEYPVLILSSILGMMVMISSNDLMVFYIGLELQSLALYVLASFNRDQLKSSESGLKYFVLSALSSGLLLYGCSLVYGFSGSTNFNVIGDLMNSSHYGLTFGIVFILVGLAFKISAVPFHMWAPDVYEGSPTAVTLFFAIVPKVAALTVFIRFLYIPFVNMIDQWQPILIFLSIASMIFGAIAAIGQNNLKRLIAYSSIGHMGYALAGLSTGSNEGIQSSIVYMSIYLVMNLAFFSCLLMLKRNDAYYETIDDLSGLSKNHPILSLSLLAILFSLAGIPPLAGFFAKFYIFKAVIEQSMYFLAIVGLLSTVIAAFYYLKIIKVIYFDKEKESYDTDHNIWLKGSLTFSTLLILLYFIFPSKLLEIVSRINII.

14 consecutive transmembrane segments (helical) span residues 6-26, 30-50, 70-90, 98-118, 123-143, 158-178, 198-218, 230-250, 264-284, 292-312, 320-340, 365-385, 400-420, and 438-458; these read FILPEIFISLSIMFLLLLGVY, SSNIVHNLAVGSLLITGILIF, LSSFMKILTILGGAFVLSIST, IFLIEYPVLILSSILGMMVMI, LMVFYIGLELQSLALYVLASF, FVLSALSSGLLLYGCSLVYGF, LTFGIVFILVGLAFKISAVPF, PTAVTLFFAIVPKVAALTVFI, WQPILIFLSIASMIFGAIAAI, LIAYSSIGHMGYALAGLSTGS, IVYMSIYLVMNLAFFSCLLML, LSLLAILFSLAGIPPLAGFFA, FLAIVGLLSTVIAAFYYLKII, and IWLKGSLTFSTLLILLYFIFP.

This sequence belongs to the complex I subunit 2 family. In terms of assembly, NDH-1 is composed of 14 different subunits. Subunits NuoA, H, J, K, L, M, N constitute the membrane sector of the complex.

Its subcellular location is the cell inner membrane. The catalysed reaction is a quinone + NADH + 5 H(+)(in) = a quinol + NAD(+) + 4 H(+)(out). Its function is as follows. NDH-1 shuttles electrons from NADH, via FMN and iron-sulfur (Fe-S) centers, to quinones in the respiratory chain. The immediate electron acceptor for the enzyme in this species is believed to be ubiquinone. Couples the redox reaction to proton translocation (for every two electrons transferred, four hydrogen ions are translocated across the cytoplasmic membrane), and thus conserves the redox energy in a proton gradient. The polypeptide is NADH-quinone oxidoreductase subunit N (Pelagibacter ubique (strain HTCC1062)).